A 1942-amino-acid polypeptide reads, in one-letter code: MSSDAEMAVFGEAAPYLRKSEKERIEAQNRPFDAKTSVFVAEPKESFVKGTIQSKDAGKVTVKTEAGATLTVKEDQIFPMNPPKYDKIEDMAMMTHLHEPAVLYNLKERYAAWMIYTYSGLFCVTVNPYKWLPVYNPEVVAAYRGKKRQEAPPHIFSISDNAYQFMLTDRENQSILITGESGAGKTVNTKRVIQYFATIAVTGDKKKEEATSGKMQGTLEDQIISANPLLEAFGNAKTVRNDNSSRFGKFIRIHFGTTGKLASADIETYLLEKSRVTFQLKAERSYHIFYQITSNKKPELIEMLLITTNPYDYPFVSQGEISVASIDDQEELMATDSAIDILGFTNDEKVSIYKLTGAVMHYGNMKFKQKQREEQAEPDGTEVADKAAYLQGLNSADLLKALCYPRVKVGNEYVTKGQTVEQVTNAVGALAKAMYEKMFLWMVTRINQQLDTKQPRQYFIGVLDIAGFEIFDFNSLEQLCINFTNEKLQQFFNHHMFVLEQEEYKKEGIEWTFIDFGMDLAACIELIEKPMGIFSILEEECMFPKATDTSFKNKLYEQHLGKSANFQKPKVVKGKAEAHFSLIHYAGTVDYNITGWLDKNKDPLNETVVGLYQKSSVKTLAYLFSGAQTAEAEASSGGAAKKGAKKKGSSFQTVSALFRENLNKLMTNLRSTHPHFVRCIIPNETKTPGAMEHELVLHQLRCNGVLEGIRICRKGFPSRILYADFKQRYKVLNASAIPEGQYIDSKKASEKLLGSIDIDHTQYKFGHTKVFFKAGLLGLLEEMRDDKLAQLITRTQAMCRGFLARVEYQKMVERRESIFCIQYNIRAFMNVKHWPWMKLFFKIKPLLKSAETEKEMATMKEEFQKTKDDLAKSEAKRKELEEKMVSLLKEKNDLQLQVQAEAEGLADAEERCDQLIKTKIQLEAKIKEVTERAEDEEEINAELTAKKRKLEDECSELKKDIDDLELTLAKVEKEKHATENKVKNLTEEMAGLDETIAKLTKEKKALQEAHQQTLDDLQAEEDKVNTLTKAKIKLEQQVDDLEGSLEQEKKLRMDLERAKRKLEGDLKLAQESIMDIENEKQQLDERLKKKEFEMSNLQSKIEDEQAIGIQLQKKIKELQARIEELEEEIEAERASRAKAEKQRSDLSRELEEISERLEEAGGATSAQIEMNKKREAEFQKMRRDLEEATLQHEATAATLRKKHADSVAELGEQIDNLQRVKQKLEKEKSEMKMEIDDLASNVETVSKAKGNLEKMCRTLEDQVSELKSKEEEQQRLINDLTTQRGRLQTESGEFSRQLDEKEALVSQLSRGKQAFTQQIEELKRQLEEEVKAKNALAHALQSSRHDCDLLREQYEEEQESKAELQRALSKANSEVAQWRTKYETDAIQRTEELEEAKKKLAQRLQAAEEHVEAVNAKCASLEKTKQRLQNEVEDLMLDVERTNAACAALDKKQRNFDKILAEWKQKYEETHAELEASQKEARSLGTELFKMKNAYEESLDQLETLKRENKNLQQEISDLTEQIAEGGKRIHELEKIKKQVEQEKCELQAALEEAEASLEHEEGKILRIQLELNQVKSEIDRKIAEKDEEIDQLKRNHIRVVESMQSTLDAEIRSRNDAIRIKKKMEGDLNEMEIQLNHSNRMAAEALRNYRNTQGILKDTQLHLDDALRGQEDLKEQLAMVERRANLLQAEIEELRATLEQTERSRKIAEQELLDASERVQLLHTQNTSLINTKKKLETDISQIQGEMEDIVQEARNAEEKAKKAITDAAMMAEELKKEQDTSAHLERMKKNMEQTVKDLQLRLDEAEQLALKGGKKQIQKLEARVRELEGEVESEQKRNAEAVKGLRKHERRVKELTYQTEEDRKNILRLQDLVDKLQAKVKSYKRQAEEAEEQSNTNLSKFRKIQHELEEAEERADIAESQVNKLRVKSREVHTKIISEE.

The Myosin N-terminal SH3-like domain occupies 33–82 (DAKTSVFVAEPKESFVKGTIQSKDAGKVTVKTEAGATLTVKEDQIFPMNP). 2 positions are modified to phosphothreonine: threonine 64 and threonine 69. Residues 86–785 (DKIEDMAMMT…LLGLLEEMRD (700 aa)) enclose the Myosin motor domain. 179-186 (GESGAGKT) is a binding site for ATP. Tyrosine 389 bears the Phosphotyrosine mark. At threonine 419 the chain carries Phosphothreonine. At serine 625 the chain carries Phosphoserine. Residues 662–684 (LNKLMTNLRSTHPHFVRCIIPNE) form an actin-binding region. The residue at position 760 (histidine 760) is a Pros-methylhistidine. Residues 788–817 (LAQLITRTQAMCRGFLARVEYQKMVERRES) form the IQ domain. Residues 849–1930 (SAETEKEMAT…ESQVNKLRVK (1082 aa)) are a coiled coil. 2 positions are modified to phosphoserine: serine 1095 and serine 1099. The interval 1130 to 1175 (EAERASRAKAEKQRSDLSRELEEISERLEEAGGATSAQIEMNKKRE) is disordered. The segment covering 1131-1159 (AERASRAKAEKQRSDLSRELEEISERLEE) has biased composition (basic and acidic residues). Phosphoserine is present on residues serine 1165 and serine 1240. At threonine 1244 the chain carries Phosphothreonine. Residue serine 1246 is modified to Phosphoserine. Phosphothreonine is present on threonine 1258. Serine 1264 carries the post-translational modification Phosphoserine. A Phosphothreonine modification is found at threonine 1289. Residues serine 1291, serine 1295, serine 1306, and serine 1309 each carry the phosphoserine modification. Tyrosine 1467 bears the Phosphotyrosine mark. Threonine 1470 is modified (phosphothreonine). Serine 1477 is modified (phosphoserine). Tyrosine 1495 is modified (phosphotyrosine). Serine 1498 carries the post-translational modification Phosphoserine. Threonine 1504 carries the post-translational modification Phosphothreonine. A Phosphoserine modification is found at serine 1517. At threonine 1520 the chain carries Phosphothreonine. A phosphoserine mark is found at serine 1557, serine 1577, serine 1603, serine 1606, serine 1717, and serine 1729. Threonine 1733 and threonine 1739 each carry phosphothreonine. Serine 1742 bears the Phosphoserine mark.

Belongs to the TRAFAC class myosin-kinesin ATPase superfamily. Myosin family. Muscle myosin is a hexameric protein that consists of 2 heavy chain subunits (MHC), 2 alkali light chain subunits (MLC) and 2 regulatory light chain subunits (MLC-2). Interacts with GCSAM. As to expression, expressed in type 2a myofibers in the tibialis anterior and soleus muscles (at protein level).

It localises to the cytoplasm. It is found in the myofibril. In terms of biological role, myosins are actin-based motor molecules with ATPase activity essential for muscle contraction. This Mus musculus (Mouse) protein is Myosin-2.